The primary structure comprises 812 residues: Probable E3 ubiquitin-protein ligase hulA (812 aa).

A C2 domain is found at 1 to 109 (MTCSQPNLRV…QMGGDEMLTR (109 aa)). Disordered stretches follow at residues 131–235 (NLST…WERR) and 250–350 (RTTT…YFVD). Composition is skewed to polar residues over residues 148 to 165 (MQPS…ASTP), 174 to 199 (ADPT…STIV), 214 to 223 (SRTNLSSFED), and 250 to 267 (RTTT…QTSR). A WW 1 domain is found at 226 to 259 (GRLPAGWERREDNLGRTYYVDHNTRTTTWTRPSN). Over residues 276-291 (LERRAHQSRMLPEDRT) the composition is skewed to basic and acidic residues. Polar residues predominate over residues 292-306 (GASSPNLQENQQQAQ). Over residues 307-330 (TPPAGGSASAVSMMATGATTAGTG) the composition is skewed to low complexity. 2 consecutive WW domains span residues 330–363 (GELP…DPRR) and 390–423 (GPLP…DPRL). An HECT domain is found at 479–812 (SASDLKKRLM…VEETLGFGQE (334 aa)). The active-site Glycyl thioester intermediate is Cys780.

This sequence belongs to the RSP5/NEDD4 family. Interacts with creD.

Its subcellular location is the cytoplasm. It carries out the reaction S-ubiquitinyl-[E2 ubiquitin-conjugating enzyme]-L-cysteine + [acceptor protein]-L-lysine = [E2 ubiquitin-conjugating enzyme]-L-cysteine + N(6)-ubiquitinyl-[acceptor protein]-L-lysine.. It participates in protein modification; protein ubiquitination. In terms of biological role, E3 ubiquitin-protein ligase which accepts ubiquitin from an E2 ubiquitin-conjugating enzyme in the form of a thioester and then directly transfers the ubiquitin to targeted substrates. Probably involved in the regulatory network controlling carbon source utilization. The polypeptide is Probable E3 ubiquitin-protein ligase hulA (hulA) (Aspergillus flavus (strain ATCC 200026 / FGSC A1120 / IAM 13836 / NRRL 3357 / JCM 12722 / SRRC 167)).